Here is a 262-residue protein sequence, read N- to C-terminus: Tropinone reductase homolog At2g29290 (262 aa).

13–37 (LVTGGTKGIGEAVVEELSILGARVH) contributes to the NADP(+) binding site. Residue Ser-146 participates in substrate binding. Catalysis depends on Tyr-159, which acts as the Proton acceptor.

Belongs to the short-chain dehydrogenases/reductases (SDR) family. SDR65C subfamily.

The chain is Tropinone reductase homolog At2g29290 from Arabidopsis thaliana (Mouse-ear cress).